The sequence spans 359 residues: Lipopolysaccharide 1,6-galactosyltransferase (359 aa).

2 residues coordinate UDP: Gln242 and Glu274.

It belongs to the glycosyltransferase group 1 family. Glycosyltransferase 4 subfamily.

The catalysed reaction is alpha-D-Glc-(1-&gt;3)-[L-alpha-D-Hep-(1-&gt;7)]-4-O-PO3(2-)-L-alpha-D-Hep-(1-&gt;3)-4-O-PO3(2-)-L-alpha-D-Hep-(1-&gt;5)-[alpha-Kdo-(2-&gt;4)]-alpha-Kdo-(2-&gt;6)-lipid A + UDP-alpha-D-galactose = alpha-D-Gal-(1-&gt;6)-alpha-D-Glc-(1-&gt;3)-[L-alpha-D-Hep-(1-&gt;7)]-4-O-PO3(2-)-L-alpha-D-Hep-(1-&gt;3)-4-O-PO3(2-)-L-alpha-D-Hep-(1-&gt;5)-[alpha-Kdo-(2-&gt;4)]-alpha-Kdo-(2-&gt;6)-lipid A + UDP + H(+). Its pathway is bacterial outer membrane biogenesis; LPS core biosynthesis. Its function is as follows. Galactosyltransferase involved in the biosynthesis of the core oligosaccharide region of lipopolysaccharide (LPS). Catalyzes the addition of galactose from UDP-galactose to the first glucose residue of the LPS outer core. Cannot use other sugar donors, such as UDP-glucose, UDP-glucuronic acid, UDP-galacuronic acid, GDP-mannose, ADP-glucose and GDP-glucose. In the absence of a lipid acceptor, can hydrolyze UDP-galactose to UDP and galactose. This Escherichia coli (strain K12) protein is Lipopolysaccharide 1,6-galactosyltransferase.